A 111-amino-acid polypeptide reads, in one-letter code: Antitoxin PrlF (111 aa).

In terms of domain architecture, SpoVT-AbrB spans 12–59 (TTESKVTIRGQTTIPAPVREALKLKPGLDSIHYEILPGGQVFMCRLGD).

Homodimer; forms a complex with YhaV with stoichiometry PrlF(2)-YhaV(4), possibly as a YhaV(2)-PrlF(2)-YhaV(2) complex like the MazFE complex.

The protein localises to the cytoplasm. Antitoxin component of a type II toxin-antitoxin (TA) system. Labile antitoxin that binds to the YhaV toxin and neutralizes its ribonuclease activity. Also acts as a transcription factor. The YhaV/PrlF complex binds the prlF-yhaV operon, probably negatively regulating its expression. The polypeptide is Antitoxin PrlF (prlF) (Escherichia coli O6:H1 (strain CFT073 / ATCC 700928 / UPEC)).